The primary structure comprises 258 residues: NAD-dependent protein deacylase (258 aa).

The Deacetylase sirtuin-type domain occupies 3–258 (ERQLEKSIEH…LPALMRGLSA (256 aa)). 28-48 (GAGMSADSGLETYRDDKTGLW) contributes to the NAD(+) binding site. Substrate contacts are provided by Tyr73 and Arg76. 109–112 (QNID) contributes to the NAD(+) binding site. Residue His127 is the Proton acceptor of the active site. Residues Cys135, Cys138, Cys161, and Cys164 each coordinate Zn(2+). NAD(+) contacts are provided by residues 201–203 (GTS) and Ala245.

Belongs to the sirtuin family. Class III subfamily. Zn(2+) serves as cofactor.

The protein localises to the cytoplasm. The enzyme catalyses N(6)-acetyl-L-lysyl-[protein] + NAD(+) + H2O = 2''-O-acetyl-ADP-D-ribose + nicotinamide + L-lysyl-[protein]. It carries out the reaction N(6)-succinyl-L-lysyl-[protein] + NAD(+) + H2O = 2''-O-succinyl-ADP-D-ribose + nicotinamide + L-lysyl-[protein]. Functionally, NAD-dependent lysine deacetylase and desuccinylase that specifically removes acetyl and succinyl groups on target proteins. Modulates the activities of several proteins which are inactive in their acylated form. This is NAD-dependent protein deacylase from Corynebacterium glutamicum (strain ATCC 13032 / DSM 20300 / JCM 1318 / BCRC 11384 / CCUG 27702 / LMG 3730 / NBRC 12168 / NCIMB 10025 / NRRL B-2784 / 534).